The chain runs to 1039 residues: Antigen 43 (1039 aa).

Positions 1–52 (MKRHLNTCYRLVWNHMTGAFVVASELARARGKRGGVAVALSLAAVTSLPVLA) are cleaved as a signal peptide. The region spanning 737–1039 (VNGENNSVRL…NGQATLNVTF (303 aa)) is the Autotransporter domain.

Interaction with TamA of the translocation and assembly module (TAM) initiates insertion in the outer membrane.

It localises to the periplasm. Its subcellular location is the secreted. It is found in the cell surface. The protein resides in the cell outer membrane. Controls colony form variation and autoaggregation. May function as an adhesin. In Escherichia coli (strain K12), this protein is Antigen 43 (flu).